We begin with the raw amino-acid sequence, 486 residues long: Membrane-bound lytic murein transglycosylase F (486 aa).

The first 21 residues, 1 to 21, serve as a signal peptide directing secretion; sequence MTRIKLSYFTIGLVALLLALA. The non-LT domain stretch occupies residues 22-268; it reads LWPNIPWRNG…RLEEKYLGHV (247 aa). The interval 269–486 is LT domain; the sequence is GSFDYVDTKT…VVGPGWSIGD (218 aa). Residue E313 is part of the active site.

It in the N-terminal section; belongs to the bacterial solute-binding protein 3 family. The protein in the C-terminal section; belongs to the transglycosylase Slt family.

The protein localises to the cell outer membrane. It carries out the reaction Exolytic cleavage of the (1-&gt;4)-beta-glycosidic linkage between N-acetylmuramic acid (MurNAc) and N-acetylglucosamine (GlcNAc) residues in peptidoglycan, from either the reducing or the non-reducing ends of the peptidoglycan chains, with concomitant formation of a 1,6-anhydrobond in the MurNAc residue.. Functionally, murein-degrading enzyme that degrades murein glycan strands and insoluble, high-molecular weight murein sacculi, with the concomitant formation of a 1,6-anhydromuramoyl product. Lytic transglycosylases (LTs) play an integral role in the metabolism of the peptidoglycan (PG) sacculus. Their lytic action creates space within the PG sacculus to allow for its expansion as well as for the insertion of various structures such as secretion systems and flagella. The polypeptide is Membrane-bound lytic murein transglycosylase F (Yersinia pseudotuberculosis serotype I (strain IP32953)).